The chain runs to 260 residues: Putative enoyl-CoA hydratase/isomerase YngF (260 aa).

This sequence belongs to the enoyl-CoA hydratase/isomerase family.

The protein is Putative enoyl-CoA hydratase/isomerase YngF (yngF) of Bacillus subtilis (strain 168).